We begin with the raw amino-acid sequence, 870 residues long: MALPLPPASNLHSILLVTKSRSLGPRLVFHYPPLSPSAAALAGAKDPAWYRHDVSTASIGSGSSDSEWDSSTATDDDNDVEIGSRTSGGRGSGRTLTGASFRDRDRSKLGTEVWNKQETIDEDDPDDEDGDRNGRNRRRGGDYDWDTVLGFKTDALEKMLSPGKEFNKRRFELGVESIVFVGAPMFVREDGLWKKLKRRKKKRSDKEKLDDADFVKNLTISEEDEEADTVDEIPVKSKPEPFVYPEGFEPGYGHGSISSGPSGAPSEAGSDARSNSTSQDNNPDMNMFNVVFVLNPPALEYQQRVKEMYDNVTRKYAKALKYEEARFQYVWKESKRIIDLKQRAKESNESLTSTWRKIISTSPLAKSIAIMFDAISHDKIAHIHFDATFNTSFQIPQADSTPYLPTALEPQMPGLWLTTSNVVLADDESPMTQHAALLLLEDTETLIKDLGGEVTGNAAAIAFYIRNIIPTKSLLKISKRHNISAHDMEYIASHLVYWRRARLIAPLSPRDTYIVSPNADFSLLPSAVTAYAQRFPTLPTLPKVLNMLSGTPRPFRNFIPTTEHREAYMDILAWLMRGGWVTQLRTFAWVRVTPEIKAKVAAEMEREERIKKAEEARKELLSDNESVAESLLSDKRSSLLSAGTVRSSTPLRMAHRDRGTGGLGEEDMHHSTILSPRITASAAPSYRGSPTRASSDAGSTSSQRTTIALSSSQRPDSPSRLGVRDVKPHRPSPLHLHPTSPSRGSAVSLASPTATSPPPSPKDFKPSIVYSPQKATSLEARWLEKIGQSFEDVGNIIPTPNPSPPKGQDGGMFGITGKELREAWPILLKHLDGRHAIEDVAPRENMKRKRVAAMYNTIKERGWLVVVRHW.

Low complexity predominate over residues 56-73 (TASIGSGSSDSEWDSSTA). Disordered stretches follow at residues 56 to 139 (TASI…NRRR), 253 to 283 (GHGS…DNNP), and 642 to 768 (AGTV…KPSI). The segment covering 120–130 (IDEDDPDDEDG) has biased composition (acidic residues). Residues 255–272 (GSISSGPSGAPSEAGSDA) are compositionally biased toward low complexity. Composition is skewed to polar residues over residues 273-283 (RSNSTSQDNNP) and 691-716 (TRAS…QRPD). Residues 733 to 754 (PLHLHPTSPSRGSAVSLASPTA) show a composition bias toward low complexity.

The protein belongs to the NPR3 family.

In terms of biological role, mediates inactivation of the TORC1 complex in response to amino acid starvation. Required for meiotic nuclear division. The polypeptide is Nitrogen permease regulator 3 (NPR3) (Phaeosphaeria nodorum (strain SN15 / ATCC MYA-4574 / FGSC 10173) (Glume blotch fungus)).